We begin with the raw amino-acid sequence, 160 residues long: Transcription antitermination protein NusB (160 aa).

This sequence belongs to the NusB family.

Involved in transcription antitermination. Required for transcription of ribosomal RNA (rRNA) genes. Binds specifically to the boxA antiterminator sequence of the ribosomal RNA (rrn) operons. This is Transcription antitermination protein NusB from Maricaulis maris (strain MCS10) (Caulobacter maris).